We begin with the raw amino-acid sequence, 393 residues long: Putative F-box/kelch-repeat protein At1g32430 (393 aa).

The 47-residue stretch at 1 to 47 folds into the F-box domain; it reads MANKEKLPWDLEEEILSRVPPTSLDRFKTVCKRWNALFNDKTFINNH. 2 Kelch repeats span residues 151–199 and 308–357; these read YMKD…NLSV and WIYV…QVQF.

The protein is Putative F-box/kelch-repeat protein At1g32430 of Arabidopsis thaliana (Mouse-ear cress).